A 496-amino-acid chain; its full sequence is Costunolide synthase (496 aa).

Residues 4 to 24 (FTIFSLVVASLVFFACWALVA) traverse the membrane as a helical; Signal-anchor for type II membrane protein segment. Asn26, Asn168, Asn280, and Asn412 each carry an N-linked (GlcNAc...) asparagine glycan. Cys434 contributes to the heme binding site.

The protein belongs to the cytochrome P450 family. Heme serves as cofactor. In terms of tissue distribution, expressed in floral glandular trichomes.

The protein resides in the membrane. It catalyses the reaction germacra-1(10),4,11(13)-trien-12-oate + reduced [NADPH--hemoprotein reductase] + O2 = (+)-costunolide + oxidized [NADPH--hemoprotein reductase] + 2 H2O. It participates in secondary metabolite biosynthesis; terpenoid biosynthesis. Functionally, involved in the biosynthesis of germacrene-derived sesquiterpene lactones. Component of the parthenolide biosynthetic pathway; parthenolide and conjugates are promising anti-cancer drugs highly active against colon cancer cells. Hydroxylates germacrene A acid to 6-alpha-hydroxy-germacrene A acid, a precursor of sesquiterpene lactones that spontaneously undergoes a lactonization which yields costunolide. The sequence is that of Costunolide synthase from Tanacetum parthenium (Feverfew).